A 655-amino-acid polypeptide reads, in one-letter code: MSSSNVEVFIPVSQGNTNGFPATASNDLKAFTEGAVLSFHNICYRVKLKSGFLPCRKPVEKEILSNINGIMKPGLNAILGPTGGGKSSLLDVLAARKDPSGLSGDVLINGAPRPANFKCNSGYVVQDDVVMGTLTVRENLQFSAALRLATTMTNHEKNERINRVIQELGLDKVADSKVGTQFIRGVSGGERKRTSIGMELITDPSILFLDEPTTGLDSSTANAVLLLLKRMSKQGRTIIFSIHQPRYSIFKLFDSLTLLASGRLMFHGPAQEALGYFESAGYHCEAYNNPADFFLDIINGDSTAVALNREEDFKATEIIEPSKQDKPLIEKLAEIYVNSSFYKETKAELHQLSGGEKKKKITVFKEISYTTSFCHQLRWVSKRSFKNLLGNPQASIAQIIVTVVLGLVIGAIYFGLKNDSTGIQNRAGVLFFLTTNQCFSSVSAVELFVVEKKLFIHEYISGYYRVSSYFLGKLLSDLLPMRMLPSIIFTCIVYFMLGLKPKADAFFVMMFTLMMVAYSASSMALAIAAGQSVVSVATLLMTICFVFMMIFSGLLVNLTTIASWLSWLQYFSIPRYGFTALQHNEFLGQNFCPGLNATGNNPCNYATCTGEEYLVKQGIDLSPWGLWKNHVALACMIVIFLTIAYLKLLFLKKYS.

The Cytoplasmic portion of the chain corresponds to 1 to 395 (MSSSNVEVFI…KNLLGNPQAS (395 aa)). One can recognise an ABC transporter domain in the interval 37–286 (LSFHNICYRV…FESAGYHCEA (250 aa)). ATP is bound by residues 80-87 (GPTGGGKS), 184-190 (RGVSGGE), Glu-211, and His-243. The residue at position 362 (Thr-362) is a Phosphothreonine; by PIM1. Residues 389-651 (LGNPQASIAQ…TIAYLKLLFL (263 aa)) enclose the ABC transmembrane type-2 domain. Residues 396 to 416 (IAQIIVTVVLGLVIGAIYFGL) traverse the membrane as a helical segment. Residues 417 to 428 (KNDSTGIQNRAG) are Extracellular-facing. A helical membrane pass occupies residues 429-449 (VLFFLTTNQCFSSVSAVELFV). The Cytoplasmic segment spans residues 450-477 (VEKKLFIHEYISGYYRVSSYFLGKLLSD). A helical transmembrane segment spans residues 478-498 (LLPMRMLPSIIFTCIVYFMLG). The Extracellular segment spans residues 499–506 (LKPKADAF). The helical transmembrane segment at 507–527 (FVMMFTLMMVAYSASSMALAI) threads the bilayer. Residues 528 to 535 (AAGQSVVS) are Cytoplasmic-facing. The helical transmembrane segment at 536-556 (VATLLMTICFVFMMIFSGLLV) threads the bilayer. Residues 557 to 630 (NLTTIASWLS…LSPWGLWKNH (74 aa)) are Extracellular-facing. Cysteines 592 and 608 form a disulfide. A glycan (N-linked (GlcNAc...) asparagine) is linked at Asn-596. Residues 631-651 (VALACMIVIFLTIAYLKLLFL) traverse the membrane as a helical segment. Over 652–655 (KKYS) the chain is Cytoplasmic.

The protein belongs to the ABC transporter superfamily. ABCG family. Eye pigment precursor importer (TC 3.A.1.204) subfamily. In terms of assembly, homodimer; disulfide-linked. The minimal functional unit is a homodimer, but the major oligomeric form in plasma membrane is a homotetramer with possibility of higher order oligomerization up to homododecamers. Post-translationally, N-glycosylated. Glycosylation-deficient ABCG2 is normally expressed and functional. In terms of processing, phosphorylated. Phosphorylation at Thr-362 by PIM1 is induced by drugs like mitoxantrone and is associated with cells increased drug resistance. It regulates the localization to the plasma membrane, the homooligomerization and therefore, the activity of the transporter. In terms of tissue distribution, highly expressed in placenta. Low expression in small intestine, liver and colon. Expressed in brain (at protein level).

The protein localises to the cell membrane. It localises to the apical cell membrane. The protein resides in the mitochondrion membrane. The enzyme catalyses ATP + H2O + xenobioticSide 1 = ADP + phosphate + xenobioticSide 2.. It carries out the reaction urate(in) + ATP + H2O = urate(out) + ADP + phosphate + H(+). The catalysed reaction is indoxyl sulfate(in) + ATP + H2O = indoxyl sulfate(out) + ADP + phosphate + H(+). It catalyses the reaction sphing-4-enine 1-phosphate(in) + ATP + H2O = sphing-4-enine 1-phosphate(out) + ADP + phosphate + H(+). The enzyme catalyses estrone 3-sulfate(in) + ATP + H2O = estrone 3-sulfate(out) + ADP + phosphate + H(+). It carries out the reaction dehydroepiandrosterone 3-sulfate(in) + ATP + H2O = dehydroepiandrosterone 3-sulfate(out) + ADP + phosphate + H(+). The catalysed reaction is 4-methylumbelliferone sulfate(in) + ATP + H2O = 4-methylumbelliferone sulfate(out) + ADP + phosphate + H(+). It catalyses the reaction 5,7-dimethyl-2-methylamino-4-(3-pyridylmethyl)-1,3-benzothiazol-6-yl beta-D-glucuronate(in) + ATP + H2O = 5,7-dimethyl-2-methylamino-4-(3-pyridylmethyl)-1,3-benzothiazol-6-yl beta-D-glucuronate(out) + ADP + phosphate + H(+). The enzyme catalyses 4-methylumbelliferone beta-D-glucuronate(in) + ATP + H2O = 4-methylumbelliferone beta-D-glucuronate(out) + ADP + phosphate + H(+). It carries out the reaction 5,7-dimethyl-2-methylamino-4-(3-pyridylmethyl)-1,3-benzothiazol-6-yl sulfate(in) + ATP + H2O = 5,7-dimethyl-2-methylamino-4-(3-pyridylmethyl)-1,3-benzothiazol-6-yl sulfate(out) + ADP + phosphate + H(+). The catalysed reaction is 17beta-estradiol 17-O-(beta-D-glucuronate)(in) + ATP + H2O = 17beta-estradiol 17-O-(beta-D-glucuronate)(out) + ADP + phosphate + H(+). It catalyses the reaction methotrexate(in) + ATP + H2O = methotrexate(out) + ADP + phosphate + H(+). The enzyme catalyses riboflavin(in) + ATP + H2O = riboflavin(out) + ADP + phosphate + H(+). It carries out the reaction pheophorbide a(in) + ATP + H2O = pheophorbide a(out) + ADP + phosphate + H(+). The catalysed reaction is itaconate(in) + ATP + H2O = itaconate(out) + ADP + phosphate + H(+). Specifically inhibited by the fungal toxin fumitremorgin C and Ko143. Its function is as follows. Broad substrate specificity ATP-dependent transporter of the ATP-binding cassette (ABC) family that actively extrudes a wide variety of physiological compounds, dietary toxins and xenobiotics from cells. Involved in porphyrin homeostasis, mediating the export of protoporphyrin IX (PPIX) from both mitochondria to cytosol and cytosol to extracellular space, it also functions in the cellular export of heme. Also mediates the efflux of sphingosine-1-P from cells. Acts as a urate exporter functioning in both renal and extrarenal urate excretion. In kidney, it also functions as a physiological exporter of the uremic toxin indoxyl sulfate. Also involved in the excretion of steroids like estrone 3-sulfate/E1S, 3beta-sulfooxy-androst-5-en-17-one/DHEAS, and other sulfate conjugates. Mediates the secretion of the riboflavin and biotin vitamins into milk. Extrudes pheophorbide a, a phototoxic porphyrin catabolite of chlorophyll, reducing its bioavailability. Plays an important role in the exclusion of xenobiotics from the brain. It confers to cells a resistance to multiple drugs and other xenobiotics including mitoxantrone, pheophorbide, camptothecin, methotrexate, azidothymidine, and the anthracyclines daunorubicin and doxorubicin, through the control of their efflux. In placenta, it limits the penetration of drugs from the maternal plasma into the fetus. May play a role in early stem cell self-renewal by blocking differentiation. In inflammatory macrophages, exports itaconate from the cytosol to the extracellular compartment and limits the activation of TFEB-dependent lysosome biogenesis involved in antibacterial innate immune response. This is Broad substrate specificity ATP-binding cassette transporter ABCG2 (ABCG2) from Homo sapiens (Human).